Consider the following 178-residue polypeptide: Bryoporin (178 aa).

Phosphocholine-binding residues include S51, V83, S102, P104, and Y134. The segment at 101-117 (WSVPFDYNLYSNWWNIA) is trp-rich region.

It belongs to the actinoporin family. Plant subfamily.

Inhibited by sphingomyelin. Functionally, actinoporin-related protein having hemolytic activity in vitro. Binds probably a phosphocholine derivative with the unique amido or hydroxyl groups found in sphingomyelin. Involved in drought tolerance. This Physcomitrium patens (Spreading-leaved earth moss) protein is Bryoporin.